Here is a 316-residue protein sequence, read N- to C-terminus: Olfactory receptor 52A5 (316 aa).

Residues 1–27 (MPTFNGSVFMPSAFILIGIPGLESVQC) are Extracellular-facing. Asn-5 carries N-linked (GlcNAc...) asparagine glycosylation. A helical transmembrane segment spans residues 28–48 (WIGIPFSAMYLIGVIGNSLIL). Topologically, residues 49–56 (VIIKYENS) are cytoplasmic. Residues 57-77 (LHIPMYIFLAMLAATDIALNT) form a helical membrane-spanning segment. The Extracellular portion of the chain corresponds to 78–101 (CILPKMLGIFWFHLPEISFDACLF). A helical membrane pass occupies residues 102–122 (QMWLIHSFQAIESGILLAMAL). The Cytoplasmic portion of the chain corresponds to 123–141 (DRYVAICIPLRHATIFSQQ). Residues 142-162 (FLTHIGLGVTLRAAILIIPSL) form a helical membrane-spanning segment. Topologically, residues 163 to 199 (GLIKCCLKHYRTTVISHSYCEHMAIVKLATEDIRVNK) are extracellular. The chain crosses the membrane as a helical span at residues 200–220 (IYGLFVAFAILGFDIIFITLS). Topologically, residues 221 to 240 (YVQIFITVFQLPQKEARFKA) are cytoplasmic. A helical transmembrane segment spans residues 241–261 (FNTCIAHICVFLQFYLLAFFS). The Extracellular segment spans residues 262–276 (FFTHRFGSHIPPYIH). The chain crosses the membrane as a helical span at residues 277–297 (ILLSNLYLLVPPFLNPIVYGV). Residues 298–316 (KTKQIRDHIVKVFFFKKVT) lie on the Cytoplasmic side of the membrane.

The protein belongs to the G-protein coupled receptor 1 family.

The protein localises to the cell membrane. In terms of biological role, odorant receptor. This chain is Olfactory receptor 52A5 (OR52A5), found in Homo sapiens (Human).